A 268-amino-acid chain; its full sequence is Homeobox protein CDX-1 (268 aa).

Residues 1-152 (MYVGYVLDKD…AGGGGSGKTR (152 aa)) are disordered. Pro residues-rich tracts occupy residues 29–42 (TYAP…PPQY) and 54–67 (APAP…PFPA). The span at 73–91 (AAAYGPGPTASAASPAPLA) shows a compositional bias: low complexity. A compositionally biased stretch (pro residues) spans 92 to 108 (FGPPPDFSPVPAPPGPG). Low complexity predominate over residues 115-128 (SLGAPGAPSSPGAP). Residues 154–213 (KDKYRVVYTDHQRLELEKEFHYSRYITIRRKSELAANLGLTERQVKIWFQNRRAKERKVN) constitute a DNA-binding region (homeobox). The tract at residues 157–178 (YRVVYTDHQRLELEKEFHYSRY) is interaction with DNA. The segment at 196 to 207 (RQVKIWFQNRRA) is interaction with 5-mCpG DNA. A disordered region spans residues 209–268 (ERKVNKKKQQQQQPLPPTQLPLPLDGTPTPSGPPLGSLCPTNAGLLGTPSPVPVKEEFLP). The span at 229 to 246 (PLPLDGTPTPSGPPLGSL) shows a compositional bias: low complexity.

This sequence belongs to the Caudal homeobox family. In terms of tissue distribution, intestinal epithelium.

The protein localises to the nucleus. Plays a role in transcriptional regulation. Involved in activated KRAS-mediated transcriptional activation of PRKD1 in colorectal cancer (CRC) cells. Binds to the PRKD1 promoter in colorectal cancer (CRC) cells. Could play a role in the terminal differentiation of the intestine. Binds preferentially to methylated DNA. The polypeptide is Homeobox protein CDX-1 (Cdx1) (Mus musculus (Mouse)).